The chain runs to 906 residues: Protein translocase subunit SecA (906 aa).

ATP-binding positions include glutamine 87, 105–109, and aspartate 512; that span reads GEGKT. Residues 875–897 form a disordered region; that stretch reads VTFVRDEQKVGRNDPCPCGSGKK. Zn(2+) contacts are provided by cysteine 890, cysteine 892, cysteine 901, and histidine 902.

This sequence belongs to the SecA family. In terms of assembly, monomer and homodimer. Part of the essential Sec protein translocation apparatus which comprises SecA, SecYEG and auxiliary proteins SecDF-YajC and YidC. Zn(2+) serves as cofactor.

It is found in the cell inner membrane. It localises to the cytoplasm. It carries out the reaction ATP + H2O + cellular proteinSide 1 = ADP + phosphate + cellular proteinSide 2.. In terms of biological role, part of the Sec protein translocase complex. Interacts with the SecYEG preprotein conducting channel. Has a central role in coupling the hydrolysis of ATP to the transfer of proteins into and across the cell membrane, serving both as a receptor for the preprotein-SecB complex and as an ATP-driven molecular motor driving the stepwise translocation of polypeptide chains across the membrane. The sequence is that of Protein translocase subunit SecA from Aeromonas hydrophila subsp. hydrophila (strain ATCC 7966 / DSM 30187 / BCRC 13018 / CCUG 14551 / JCM 1027 / KCTC 2358 / NCIMB 9240 / NCTC 8049).